We begin with the raw amino-acid sequence, 410 residues long: ACT domain-containing protein ACR10 (410 aa).

3 ACT domains span residues 22-105 (VITI…SESQ), 114-197 (LLKL…LVGP), and 245-324 (LIHI…VVMM).

Its function is as follows. May bind amino acids. This chain is ACT domain-containing protein ACR10, found in Arabidopsis thaliana (Mouse-ear cress).